We begin with the raw amino-acid sequence, 144 residues long: Peptide methionine sulfoxide reductase B7 (144 aa).

In terms of domain architecture, MsrB spans aspartate 19–alanine 140. Residues cysteine 58, cysteine 61, cysteine 104, and cysteine 107 each coordinate Zn(2+). A disulfide bridge connects residues cysteine 76 and cysteine 129. Cysteine 129 serves as the catalytic Nucleophile.

The protein belongs to the MsrB Met sulfoxide reductase family. Zn(2+) serves as cofactor.

It is found in the cytoplasm. The protein localises to the cytosol. The enzyme catalyses L-methionyl-[protein] + [thioredoxin]-disulfide + H2O = L-methionyl-(R)-S-oxide-[protein] + [thioredoxin]-dithiol. Catalyzes the reduction of methionine sulfoxide (MetSO) to methionine in proteins. Plays a protective role against oxidative stress by restoring activity to proteins that have been inactivated by methionine oxidation. MSRB family specifically reduces the MetSO R-enantiomer. This Arabidopsis thaliana (Mouse-ear cress) protein is Peptide methionine sulfoxide reductase B7 (MSRB7).